The chain runs to 720 residues: Zinc finger protein 408 (720 aa).

The tract at residues 201-350 is disordered; the sequence is VQQEVASPGE…GPAGSSPKQG (150 aa). Over residues 275-285 the composition is skewed to polar residues; the sequence is LQSNSATQQDP. Positions 287 to 296 are enriched in low complexity; that stretch reads GSGASFSSSA. Thr-322 is subject to Phosphothreonine. 10 consecutive C2H2-type zinc fingers follow at residues 353 to 375, 381 to 403, 409 to 431, 437 to 459, 468 to 490, 496 to 518, 524 to 546, 551 to 573, 579 to 601, and 607 to 629; these read YRCG…AFVH, FLCT…MLGH, FPCP…QVVH, FACD…RKTH, CPCP…MRLH, FLCP…LRLH, YRCP…LISH, HLCP…ERLH, FPCP…LKSH, and YRCP…QLSH.

In terms of tissue distribution, highest expression is observed in adult retina; abundantly expressed in the fetal eye. In the retina, it is detected in the outer nuclear layer, especially cone and rod photoreceptor cells, ganglion cell layer and both outer and inner plexiform layers (at protein level). Expressed in retinal blood vessels (at protein level).

It is found in the nucleus. In terms of biological role, may be involved in transcriptional regulation. This is Zinc finger protein 408 (ZNF408) from Homo sapiens (Human).